Reading from the N-terminus, the 203-residue chain is Outer-membrane lipoprotein carrier protein (203 aa).

Residues 1-21 form the signal peptide; that stretch reads MKKWLAISCLIAGVTSTAVYA.

This sequence belongs to the LolA family. Monomer.

It localises to the periplasm. Participates in the translocation of lipoproteins from the inner membrane to the outer membrane. Only forms a complex with a lipoprotein if the residue after the N-terminal Cys is not an aspartate (The Asp acts as a targeting signal to indicate that the lipoprotein should stay in the inner membrane). The chain is Outer-membrane lipoprotein carrier protein from Pectobacterium atrosepticum (strain SCRI 1043 / ATCC BAA-672) (Erwinia carotovora subsp. atroseptica).